A 305-amino-acid polypeptide reads, in one-letter code: Ribonucleoside-diphosphate reductase small subunit (305 aa).

Residues glutamate 64, glutamate 94, and histidine 97 each contribute to the Fe cation site. Tyrosine 101 is a catalytic residue. A helical membrane pass occupies residues 150-170 (ILLFLLVEGIFFISSFFSIGL). Positions 157, 191, and 194 each coordinate Fe cation.

This sequence belongs to the ribonucleoside diphosphate reductase small chain family. As to quaternary structure, heterotetramer composed of a homodimer of the large subunit (R1) and a homodimer of the small subunit (R2). Larger multisubunit protein complex are also active, composed of (R1)n(R2)n. It depends on Fe cation as a cofactor.

The protein localises to the host membrane. The catalysed reaction is a 2'-deoxyribonucleoside 5'-diphosphate + [thioredoxin]-disulfide + H2O = a ribonucleoside 5'-diphosphate + [thioredoxin]-dithiol. In terms of biological role, ribonucleoside-diphosphate reductase holoenzyme provides the precursors necessary for viral DNA synthesis. Allows virus growth in non-dividing cells, as well as reactivation from latency in infected hosts. Catalyzes the biosynthesis of deoxyribonucleotides from the corresponding ribonucleotides. This is Ribonucleoside-diphosphate reductase small subunit from Saimiri sciureus (Common squirrel monkey).